The sequence spans 347 residues: MSEPIVLGIESTCDETAAAVVQGRTLISNVVASSMDEHARYGGVIPEIASRAHAEAFVPCVSKALADANMTLSDVDAIAVSAGPGLAGCLAVGVSGAKSLAWAANKPIYGINHVIGHIAVTQLQFGPFPKDTLALIVSGGHTSLLHVEDVARHIDVVGTTLDDAAGECFDKVARLLGFPYPGGPHIDRHAQLGNPHAIKVPQGLTQGKAGQQHPYDFSFSGVKTAVARWIEQQQAEGNEIPIDDVCASLADSVATVLARKAMRGCEQYGSKTLIVGGGFSANSQLRAKLLEVGAKHGVEVRIPQIKLCTDNGAMVAMLGVNLVESGVKPSEPDFAIDSAMPLTKISM.

Residues His113 and His117 each coordinate Fe cation. Substrate is bound by residues 136 to 140 (IVSGG), Asp170, Gly183, Asp187, and Asn282. Asp310 lines the Fe cation pocket.

This sequence belongs to the KAE1 / TsaD family. Fe(2+) is required as a cofactor.

The protein resides in the cytoplasm. It carries out the reaction L-threonylcarbamoyladenylate + adenosine(37) in tRNA = N(6)-L-threonylcarbamoyladenosine(37) in tRNA + AMP + H(+). In terms of biological role, required for the formation of a threonylcarbamoyl group on adenosine at position 37 (t(6)A37) in tRNAs that read codons beginning with adenine. Is involved in the transfer of the threonylcarbamoyl moiety of threonylcarbamoyl-AMP (TC-AMP) to the N6 group of A37, together with TsaE and TsaB. TsaD likely plays a direct catalytic role in this reaction. The polypeptide is tRNA N6-adenosine threonylcarbamoyltransferase (Bifidobacterium adolescentis (strain ATCC 15703 / DSM 20083 / NCTC 11814 / E194a)).